A 121-amino-acid polypeptide reads, in one-letter code: Small ribosomal subunit protein uS11c (121 aa).

The protein belongs to the universal ribosomal protein uS11 family. In terms of assembly, part of the 30S ribosomal subunit.

It localises to the plastid. The protein localises to the chloroplast. This chain is Small ribosomal subunit protein uS11c, found in Cyanidioschyzon merolae (strain NIES-3377 / 10D) (Unicellular red alga).